The chain runs to 249 residues: Low affinity immunoglobulin gamma Fc region receptor III-A (249 aa).

The signal sequence occupies residues 1 to 20 (MWYLLLPTALLLTVSSGVGA). Residues 21 to 203 (GLQKAVVNLD…SPSSFLPWHQ (183 aa)) are Extracellular-facing. Ig-like C2-type domains lie at 31–103 (PEWV…QLDV) and 117–188 (FQEG…LQIS). Intrachain disulfides connect cysteine 46-cysteine 88 and cysteine 127-cysteine 171. Asparagine 55 and asparagine 62 each carry an N-linked (GlcNAc...) asparagine glycan. An N-linked (GlcNAc...) asparagine glycan is attached at asparagine 179. A helical membrane pass occupies residues 204-224 (ITFCLLIGLLFAIDTVLYFSV). The Cytoplasmic segment spans residues 225–249 (QRSLQSSVAVYEEPKLHWSKEPQDK). A Phosphotyrosine modification is found at tyrosine 235.

Forms a heterooligomeric complex with ITAM-containing signaling subunits FCER1G. Interacts (via transmembrane domain) with signaling subunits; this interaction is a prerequisite for receptor complex expression on the cell surface and intracellular signal transduction. Binds the Fc region of antigen-complexed IgG. N-glycosylated. Post-translationally, phosphorylated following receptor ligation.

It is found in the cell membrane. Its function is as follows. Receptor for the invariable Fc fragment of immunoglobulin gamma (IgG). Binds with intermediate affinity to both IgG2a and IgG2b. Can bind to IgG2a and IgG2b monomers. Does not display binding to IgG1 or IgG3. Recognizes neutralizing virus-specific IgGs displayed on the cell surface of infected cells and triggers antibody-dependent cellular cytotoxicity (ADCC). Confers protection to lethal influenza virus infection. On splenic dendritic cells, uptakes antigen immune complexes and efficiently divert them into MHC class I and II antigen presentation pathways to provide for superior priming of CD4-positive and CD8-positive T cell immune responses. Mediates neutrophil activation by IgG complexes redundantly with FCGR2A. Plays a role in promoting bone resorption by enhancing osteoclast differentiation following binding to IgG2a. Also acts as a receptor for the Fc region of immunoglobulin epsilon (IgE). Binds with low affinity to both the a and b allotypes of IgE. Has also been shown to bind to IgE allotype a only but not to allotype b. Binds aggregated IgE but not the monomeric form and bound monomeric IgG is readily displaced by IgE complexes. Binding to IgE promotes macrophage-mediated phagocytosis, antigen presentation to T cells, production of pro-inflammatory cytokines and the late phase of cutaneous allergic reactions. Mediates enhanced ADCC in response to afucosylated IgGs. The chain is Low affinity immunoglobulin gamma Fc region receptor III-A from Rattus norvegicus (Rat).